The sequence spans 293 residues: Shikimate kinase (293 aa).

P87 to A97 serves as a coordination point for ATP.

It belongs to the GHMP kinase family. Archaeal shikimate kinase subfamily.

The protein localises to the cytoplasm. The catalysed reaction is shikimate + ATP = 3-phosphoshikimate + ADP + H(+). The protein operates within metabolic intermediate biosynthesis; chorismate biosynthesis; chorismate from D-erythrose 4-phosphate and phosphoenolpyruvate: step 5/7. This Methanosarcina mazei (strain ATCC BAA-159 / DSM 3647 / Goe1 / Go1 / JCM 11833 / OCM 88) (Methanosarcina frisia) protein is Shikimate kinase.